The sequence spans 35 residues: Photosystem I reaction center subunit Z (35 aa).

The helical transmembrane segment at 10–30 (LVIITTLVVPFMAAAALLFII) threads the bilayer.

The G.violaceus PSI reaction center is composed of one copy each of PsaA,B,C,D,E,F,L,M and Z, and forms trimeric complexes.

It localises to the cell inner membrane. The chain is Photosystem I reaction center subunit Z (psaZ) from Gloeobacter violaceus (strain ATCC 29082 / PCC 7421).